The following is a 75-amino-acid chain: Small ribosomal subunit protein bS18 (75 aa).

This sequence belongs to the bacterial ribosomal protein bS18 family. In terms of assembly, part of the 30S ribosomal subunit. Forms a tight heterodimer with protein bS6.

Binds as a heterodimer with protein bS6 to the central domain of the 16S rRNA, where it helps stabilize the platform of the 30S subunit. In Wigglesworthia glossinidia brevipalpis, this protein is Small ribosomal subunit protein bS18.